Consider the following 473-residue polypeptide: Rop guanine nucleotide exchange factor 3 (473 aa).

Residues 1–28 are disordered; sequence MENLSNPDENDDHQSPRSIDQNDQSAVE. The span at 16–28 shows a compositional bias: polar residues; that stretch reads PRSIDQNDQSAVE. Residues 95–473 form the PRONE domain; it reads LVVQEISEPE…YVDKTMRGSE (379 aa).

In terms of biological role, guanine-nucleotide exchange factor (GEF) that acts as an activator of Rop (Rho of plants) GTPases by promoting the exchange of GDP for GTP. The chain is Rop guanine nucleotide exchange factor 3 (ROPGEF3) from Arabidopsis thaliana (Mouse-ear cress).